Consider the following 253-residue polypeptide: HTH-type transcriptional regulator YdeO (253 aa).

An HTH araC/xylS-type domain is found at 137–233; it reads GKVRNIVNMK…GNSPKRVSKE (97 aa). DNA-binding regions (H-T-H motif) lie at residues 154-175 and 200-223; these read KDIC…KQEQ and VNKI…RKHF.

Induces the expression of gadE and mdtEF. Could also regulate the expression of other genes involved in acid resistance. The chain is HTH-type transcriptional regulator YdeO (ydeO) from Escherichia coli O6:H1 (strain CFT073 / ATCC 700928 / UPEC).